The primary structure comprises 426 residues: Glutamate-1-semialdehyde 2,1-aminomutase (426 aa).

N6-(pyridoxal phosphate)lysine is present on lysine 265.

The protein belongs to the class-III pyridoxal-phosphate-dependent aminotransferase family. HemL subfamily. As to quaternary structure, homodimer. The cofactor is pyridoxal 5'-phosphate.

It localises to the cytoplasm. The enzyme catalyses (S)-4-amino-5-oxopentanoate = 5-aminolevulinate. Its pathway is porphyrin-containing compound metabolism; protoporphyrin-IX biosynthesis; 5-aminolevulinate from L-glutamyl-tRNA(Glu): step 2/2. This Cellvibrio japonicus (strain Ueda107) (Pseudomonas fluorescens subsp. cellulosa) protein is Glutamate-1-semialdehyde 2,1-aminomutase.